We begin with the raw amino-acid sequence, 28 residues long: Cliotide T21 (28 aa).

The cyclopeptide (Asp-Asn) cross-link spans 1–28 (DLQCAETCVHSPCIGPCYCKHGLICYRN). Cystine bridges form between Cys-4–Cys-17, Cys-8–Cys-19, and Cys-13–Cys-25.

Post-translationally, contains 3 disulfide bonds. In terms of processing, this is a cyclic peptide. In terms of tissue distribution, expressed in root nodules but not in seed.

Probably participates in a plant defense mechanism. Not active against Gram-negative bacterium E.coli ATCC 700926 or Gram-positive bacterium S.aureus ATCC 12600 up to a concentration of 100 uM under low-salt conditions. In Clitoria ternatea (Butterfly pea), this protein is Cliotide T21.